Reading from the N-terminus, the 779-residue chain is Potassium/sodium hyperpolarization-activated cyclic nucleotide-gated channel 3 (779 aa).

The segment at 1-47 is disordered; it reads MEEEARPAAGAGEAATPARETPPAAPAQARAASGGVPESAPEPKRRQ. At 1–96 the chain is on the cytoplasmic side; sequence MEEEARPAAG…PYSDFRFYWD (96 aa). Positions 7 to 32 are enriched in low complexity; the sequence is PAAGAGEAATPARETPPAAPAQARAA. The segment at 45-90 is involved in subunit assembly; that stretch reads RRQLGTLLQPTVNKFSLRVFGSHKAVEIEQERVKSAGAWIIHPYSD. A helical transmembrane segment spans residues 97–117; sequence LIMLLLMVGNLIVLPVGITFF. Topologically, residues 118–123 are extracellular; sequence KEENSP. The helical transmembrane segment at 124-144 threads the bilayer; that stretch reads PWIVFNVLSDTFFLLDLVLNF. Over 145 to 170 the chain is Cytoplasmic; that stretch reads RTGIVVEEGAEILLAPRAIRTRYLRT. The chain crosses the membrane as a helical span at residues 171-191; it reads WFLVDLISSIPVDYIFLVVEL. Residues 192 to 200 lie on the Extracellular side of the membrane; it reads EPRLDAEVY. The chain crosses the membrane as a helical; Voltage-sensor span at residues 201 to 221; sequence KTARALRIVRFTKILSLLRLL. Residues 222–252 lie on the Cytoplasmic side of the membrane; the sequence is RLSRLIRYIHQWEEIFHMTYDLASAVVRIFN. Residues 253 to 273 form a helical membrane-spanning segment; sequence LIGMMLLLCHWDGCLQFLVPM. At 274–296 the chain is on the extracellular side; sequence LQDFPSDCWVSMNRMVNHSWGRQ. The N-linked (GlcNAc...) asparagine glycan is linked to N290. The segment at residues 297–318 is an intramembrane region (pore-forming); it reads YSHALFKAMSHMLCIGYGQQAP. The Extracellular portion of the chain corresponds to 319 to 328; it reads VGMPDVWLTM. Residues 329-349 form a helical membrane-spanning segment; it reads LSMIVGATCYAMFIGHATALI. Residues 350–779 are Cytoplasmic-facing; it reads QSLDSSRRQY…PRGPQISANM (430 aa). Residues 353–779 are interaction with KCTD3; the sequence is DSSRRQYQEK…PRGPQISANM (427 aa). Residues G491, E492, C494, R501, T502, R542, and R545 each contribute to the 3',5'-cyclic AMP site. A disordered region spans residues 549–569; it reads KNSILQRKRSEPSPGSSGGVM. S633 is modified (phosphoserine). Positions 687-697 are enriched in polar residues; the sequence is SLSRTGRSQVS. The tract at residues 687–779 is disordered; it reads SLSRTGRSQV…PRGPQISANM (93 aa).

It belongs to the potassium channel HCN family. Homotetramer. The potassium channel is composed of a homo- or heterotetrameric complex of pore-forming subunits. Interacts with HCN1. Interacts with KCTD3; this interaction increases cell surface expression and current density of this channel. Interacts with PEX5L. As to expression, detected in hypothalamus, amygdala, olfactory bulb, hippocampus and retina (at protein level). Highly expressed in brain and heart, in particular in ventricle, atrium and in sinoatrial node (SAN). Detected at low levels in skeletal muscle and lung. Expressed in DRG neurons.

The protein resides in the cell membrane. It carries out the reaction K(+)(in) = K(+)(out). The catalysed reaction is Na(+)(in) = Na(+)(out). With respect to regulation, unlike HCN2 and HCN4, HCN3 is insensitive to cyclic nucleotides, such as cAMP or cGMP. This lack of sensitivity of HCN3, despite harboring a functional cyclic nucleotide-binding domain (CNBD), may be explained by its shorter C-terminal sequence, which may alter the normal autoinhibition of the channel. Inhibited by Cs(1+) and ivabradine. Phosphatidylinositol-4,5-bisphosphate (PIP(2)) shifts HCN3 activation to more depolarized potentials and accelerated activation kinetics. In terms of biological role, hyperpolarization-activated ion channel that are permeable to sodium and potassium ions, with an about 3:1 preference for potassium ions. Contributes to the native pacemaker currents in heart (If) and in neurons (Ih). In particular, plays a pivotal role in maintaining excitability and promoting rhythmic burst firing within hypothalamic nuclei. Exerts a significant influence on the configuration of the cardiac action potential waveform. Does not appear to play a prominent role in the processing of acute, neuropathic, or inflammatory pain. This is Potassium/sodium hyperpolarization-activated cyclic nucleotide-gated channel 3 (Hcn3) from Mus musculus (Mouse).